A 61-amino-acid chain; its full sequence is L-amino-acid oxidase (61 aa).

Position 43 to 44 (43 to 44 (MA)) interacts with FAD.

It belongs to the flavin monoamine oxidase family. FIG1 subfamily. As to quaternary structure, homodimer; non-covalently linked. It depends on FAD as a cofactor. In terms of processing, N-glycosylated. Expressed by the venom gland.

Its subcellular location is the secreted. It carries out the reaction an L-alpha-amino acid + O2 + H2O = a 2-oxocarboxylate + H2O2 + NH4(+). It catalyses the reaction L-leucine + O2 + H2O = 4-methyl-2-oxopentanoate + H2O2 + NH4(+). In terms of biological role, catalyzes an oxidative deamination of predominantly hydrophobic and aromatic L-amino acids, thus producing hydrogen peroxide that may contribute to the diverse toxic effects of this enzyme. Shows activity on L-Leu. Exhibits diverse biological activities, such as apoptosis, antibacterial activities against both Gram-negative and Gram-positive bacteria and antiparasitic activities, as well as induction of platelet aggregation. Effects of snake L-amino oxidases on platelets are controversial, since they either induce aggregation or inhibit agonist-induced aggregation. These different effects are probably due to different experimental conditions. This protein may also induce hemorrhage, hemolysis, and edema. This is L-amino-acid oxidase from Crotalus durissus cascavella (Northeastern Brazilian rattlesnake).